Reading from the N-terminus, the 76-residue chain is Tautomerase PptA (76 aa).

The active-site Proton acceptor; via imino nitrogen is the proline 2.

Belongs to the 4-oxalocrotonate tautomerase family. PptA subfamily. In terms of assembly, homodimer.

The protein resides in the cytoplasm. In Pectobacterium carotovorum subsp. carotovorum (strain PC1), this protein is Tautomerase PptA.